The following is a 110-amino-acid chain: Large ribosomal subunit protein uL22 (110 aa).

It belongs to the universal ribosomal protein uL22 family. As to quaternary structure, part of the 50S ribosomal subunit.

Its function is as follows. This protein binds specifically to 23S rRNA; its binding is stimulated by other ribosomal proteins, e.g. L4, L17, and L20. It is important during the early stages of 50S assembly. It makes multiple contacts with different domains of the 23S rRNA in the assembled 50S subunit and ribosome. In terms of biological role, the globular domain of the protein is located near the polypeptide exit tunnel on the outside of the subunit, while an extended beta-hairpin is found that lines the wall of the exit tunnel in the center of the 70S ribosome. This chain is Large ribosomal subunit protein uL22, found in Pectobacterium atrosepticum (strain SCRI 1043 / ATCC BAA-672) (Erwinia carotovora subsp. atroseptica).